A 126-amino-acid polypeptide reads, in one-letter code: Holo-[acyl-carrier-protein] synthase (126 aa).

Mg(2+) contacts are provided by Asp-9 and Glu-58.

It belongs to the P-Pant transferase superfamily. AcpS family. Mg(2+) is required as a cofactor.

It localises to the cytoplasm. The enzyme catalyses apo-[ACP] + CoA = holo-[ACP] + adenosine 3',5'-bisphosphate + H(+). Functionally, transfers the 4'-phosphopantetheine moiety from coenzyme A to a Ser of acyl-carrier-protein. In Hamiltonella defensa subsp. Acyrthosiphon pisum (strain 5AT), this protein is Holo-[acyl-carrier-protein] synthase.